Reading from the N-terminus, the 149-residue chain is Transcriptional repressor NrdR (149 aa).

A zinc finger spans residues 3–34; that stretch reads CPFCSEQETKVIDSRLVAEGQQVRRRRECMVC. Residues 49-139 enclose the ATP-cone domain; it reads PRVIKRDGSR…VYRSFEDIRE (91 aa).

This sequence belongs to the NrdR family. The cofactor is Zn(2+).

Its function is as follows. Negatively regulates transcription of bacterial ribonucleotide reductase nrd genes and operons by binding to NrdR-boxes. The chain is Transcriptional repressor NrdR from Alteromonas mediterranea (strain DSM 17117 / CIP 110805 / LMG 28347 / Deep ecotype).